The sequence spans 164 residues: UPF0114 protein YqhA (164 aa).

A run of 3 helical transmembrane segments spans residues 15–35, 53–73, and 136–156; these read LLAP…LKFF, LILV…LVMV, and LMWY…MGYL.

This sequence belongs to the UPF0114 family.

The protein resides in the cell membrane. This is UPF0114 protein YqhA from Escherichia coli O139:H28 (strain E24377A / ETEC).